A 274-amino-acid chain; its full sequence is Thiamine kinase (274 aa).

The protein belongs to the thiamine kinase family.

The enzyme catalyses thiamine + ATP = thiamine phosphate + ADP + H(+). It functions in the pathway cofactor biosynthesis; thiamine diphosphate biosynthesis; thiamine phosphate from thiamine: step 1/1. Catalyzes the ATP-dependent phosphorylation of thiamine to thiamine phosphate. Is involved in thiamine salvage. The protein is Thiamine kinase of Salmonella dublin (strain CT_02021853).